The primary structure comprises 405 residues: Adenosylhomocysteinase (405 aa).

Substrate is bound by residues aspartate 113 and glutamate 138. 139-141 (TTT) is a binding site for NAD(+). Substrate is bound by residues lysine 168 and aspartate 172. NAD(+) is bound by residues asparagine 173, 202-207 (GYGWCG), glutamate 225, asparagine 260, 281-283 (AGH), and asparagine 327.

The protein belongs to the adenosylhomocysteinase family. NAD(+) is required as a cofactor.

The protein localises to the cytoplasm. It carries out the reaction S-adenosyl-L-homocysteine + H2O = L-homocysteine + adenosine. Its pathway is amino-acid biosynthesis; L-homocysteine biosynthesis; L-homocysteine from S-adenosyl-L-homocysteine: step 1/1. Its function is as follows. May play a key role in the regulation of the intracellular concentration of adenosylhomocysteine. This chain is Adenosylhomocysteinase, found in Archaeoglobus fulgidus (strain ATCC 49558 / DSM 4304 / JCM 9628 / NBRC 100126 / VC-16).